The sequence spans 622 residues: DNA mismatch repair protein MutL (622 aa).

It belongs to the DNA mismatch repair MutL/HexB family.

Functionally, this protein is involved in the repair of mismatches in DNA. It is required for dam-dependent methyl-directed DNA mismatch repair. May act as a 'molecular matchmaker', a protein that promotes the formation of a stable complex between two or more DNA-binding proteins in an ATP-dependent manner without itself being part of a final effector complex. This chain is DNA mismatch repair protein MutL, found in Prosthecochloris aestuarii (strain DSM 271 / SK 413).